A 158-amino-acid chain; its full sequence is UPF0262 protein Rsph17029_2283 (158 aa).

This sequence belongs to the UPF0262 family.

In Cereibacter sphaeroides (strain ATCC 17029 / ATH 2.4.9) (Rhodobacter sphaeroides), this protein is UPF0262 protein Rsph17029_2283.